We begin with the raw amino-acid sequence, 332 residues long: Ribosomal RNA small subunit methyltransferase H (332 aa).

S-adenosyl-L-methionine is bound by residues 39–41 (GGY), Asp-56, Phe-83, Asp-100, and Gln-107.

Belongs to the methyltransferase superfamily. RsmH family.

It is found in the cytoplasm. The catalysed reaction is cytidine(1402) in 16S rRNA + S-adenosyl-L-methionine = N(4)-methylcytidine(1402) in 16S rRNA + S-adenosyl-L-homocysteine + H(+). Specifically methylates the N4 position of cytidine in position 1402 (C1402) of 16S rRNA. This is Ribosomal RNA small subunit methyltransferase H from Bartonella quintana (strain Toulouse) (Rochalimaea quintana).